The chain runs to 212 residues: Ribonuclease HII (212 aa).

Residues 24 to 212 (QLVAGVDEVG…PVKKALGIEE (189 aa)) enclose the RNase H type-2 domain. A divalent metal cation-binding residues include aspartate 30, glutamate 31, and aspartate 122.

Belongs to the RNase HII family. Mn(2+) is required as a cofactor. Requires Mg(2+) as cofactor.

The protein localises to the cytoplasm. It carries out the reaction Endonucleolytic cleavage to 5'-phosphomonoester.. Functionally, endonuclease that specifically degrades the RNA of RNA-DNA hybrids. In Vibrio campbellii (strain ATCC BAA-1116), this protein is Ribonuclease HII.